Consider the following 317-residue polypeptide: Aspartate carbamoyltransferase catalytic subunit (317 aa).

Carbamoyl phosphate-binding residues include R66 and T67. K94 is an L-aspartate binding site. 3 residues coordinate carbamoyl phosphate: R116, H144, and Q147. Positions 177 and 231 each coordinate L-aspartate. The carbamoyl phosphate site is built by G272 and P273.

Belongs to the aspartate/ornithine carbamoyltransferase superfamily. ATCase family. Heterododecamer (2C3:3R2) of six catalytic PyrB chains organized as two trimers (C3), and six regulatory PyrI chains organized as three dimers (R2).

The catalysed reaction is carbamoyl phosphate + L-aspartate = N-carbamoyl-L-aspartate + phosphate + H(+). It functions in the pathway pyrimidine metabolism; UMP biosynthesis via de novo pathway; (S)-dihydroorotate from bicarbonate: step 2/3. In terms of biological role, catalyzes the condensation of carbamoyl phosphate and aspartate to form carbamoyl aspartate and inorganic phosphate, the committed step in the de novo pyrimidine nucleotide biosynthesis pathway. The polypeptide is Aspartate carbamoyltransferase catalytic subunit (Bradyrhizobium sp. (strain BTAi1 / ATCC BAA-1182)).